Reading from the N-terminus, the 431-residue chain is Galanin-like G-protein coupled receptor npr-9 (431 aa).

The Extracellular segment spans residues 1–34; it reads MEFENLTKEEMEQLQKIYDDTISFERKIGIIIPT. Asn5 is a glycosylation site (N-linked (GlcNAc...) asparagine). Residues 35–55 form a helical membrane-spanning segment; the sequence is IFAVIILVGLVGNALVVIVAF. At 56 to 66 the chain is on the cytoplasmic side; sequence GRQMRNSTNTL. The chain crosses the membrane as a helical span at residues 67-87; it reads IIGLAISDLMFLLLCVPFTAV. At 88-101 the chain is on the extracellular side; sequence DYAAPTWIFPEWTC. A disulfide bridge links Cys101 with Cys182. The chain crosses the membrane as a helical span at residues 102 to 124; it reads SMINFFQHTSAYCSVWTLTLMAL. Topologically, residues 125-143 are cytoplasmic; sequence DRYLAVVYPVESMTLRTPR. Residues 144–164 traverse the membrane as a helical segment; that stretch reads NTVIALCFIYIIIIASQIPVG. Residues 165-203 lie on the Extracellular side of the membrane; the sequence is RMHGIYVYDFIMEKRSTCAILTIATAEATPTMARTYFMT. Residues 204–224 form a helical membrane-spanning segment; it reads FNVFGYVLPLGISVVLYGLML. Residues 225–268 lie on the Cytoplasmic side of the membrane; sequence RKLWDMPRPGNSQSVGGRNLTNRDSGSSIRRRPEATAAKRKVTR. Positions 235 to 252 are enriched in polar residues; sequence NSQSVGGRNLTNRDSGSS. The segment at 235-257 is disordered; the sequence is NSQSVGGRNLTNRDSGSSIRRRP. The helical transmembrane segment at 269 to 289 threads the bilayer; sequence LVLCVLITWALCWLPLNVCFF. Residues 290–298 are Extracellular-facing; it reads MSGLAYPEP. Residues 299–319 form a helical membrane-spanning segment; sequence LVISHGVIMVIVQIASQVLAY. Residues 320-431 are Cytoplasmic-facing; sequence TNSCLNPILY…RSKSTRSYNL (112 aa). Residues 393–414 are compositionally biased toward polar residues; that stretch reads SLLKDNSSSATSVQPLRTSIQA. The tract at residues 393-431 is disordered; the sequence is SLLKDNSSSATSVQPLRTSIQAKKTKNIGRSKSTRSYNL. Basic residues predominate over residues 415–425; it reads KKTKNIGRSKS.

Belongs to the G-protein coupled receptor 1 family. In terms of tissue distribution, exclusively expressed in the AIB interneuron.

The protein resides in the cell membrane. Its function is as follows. Neuropeptide that controls movement such as roaming, foraging and backwards locomotion or 'reversals' in response to environmental cues such as food availability or volatile odorants such as octanol. Antagonizes AIB interneuron activity to control bacterial colonization and may negatively regulate the expression of immunity-related genes such as pqm-1 and dod-22 in response to infection by P.aeruginosa. The polypeptide is Galanin-like G-protein coupled receptor npr-9 (Caenorhabditis elegans).